The chain runs to 421 residues: Gamma-glutamyl phosphate reductase (421 aa).

This sequence belongs to the gamma-glutamyl phosphate reductase family.

The protein resides in the cytoplasm. The catalysed reaction is L-glutamate 5-semialdehyde + phosphate + NADP(+) = L-glutamyl 5-phosphate + NADPH + H(+). The protein operates within amino-acid biosynthesis; L-proline biosynthesis; L-glutamate 5-semialdehyde from L-glutamate: step 2/2. Functionally, catalyzes the NADPH-dependent reduction of L-glutamate 5-phosphate into L-glutamate 5-semialdehyde and phosphate. The product spontaneously undergoes cyclization to form 1-pyrroline-5-carboxylate. The chain is Gamma-glutamyl phosphate reductase from Acinetobacter baumannii (strain ATCC 17978 / DSM 105126 / CIP 53.77 / LMG 1025 / NCDC KC755 / 5377).